The sequence spans 600 residues: UvrABC system protein C (600 aa).

The region spanning 15 to 92 (EKPGCYLMKD…IKKYQPYYNV (78 aa)) is the GIY-YIG domain. One can recognise a UVR domain in the interval 197-232 (TSVKQDLTTKMEKASENLEFERAAEIRDQLKYIEET).

Belongs to the UvrC family. Interacts with UvrB in an incision complex.

The protein localises to the cytoplasm. The UvrABC repair system catalyzes the recognition and processing of DNA lesions. UvrC both incises the 5' and 3' sides of the lesion. The N-terminal half is responsible for the 3' incision and the C-terminal half is responsible for the 5' incision. The chain is UvrABC system protein C from Lactobacillus acidophilus (strain ATCC 700396 / NCK56 / N2 / NCFM).